A 104-amino-acid chain; its full sequence is Large ribosomal subunit protein bL21 (104 aa).

Belongs to the bacterial ribosomal protein bL21 family. As to quaternary structure, part of the 50S ribosomal subunit. Contacts protein L20.

Functionally, this protein binds to 23S rRNA in the presence of protein L20. The protein is Large ribosomal subunit protein bL21 of Acidiphilium cryptum (strain JF-5).